The following is a 129-amino-acid chain: Large ribosomal subunit protein bL21 (129 aa).

Belongs to the bacterial ribosomal protein bL21 family. As to quaternary structure, part of the 50S ribosomal subunit. Contacts protein L20.

This protein binds to 23S rRNA in the presence of protein L20. This chain is Large ribosomal subunit protein bL21, found in Microcystis aeruginosa (strain NIES-843 / IAM M-2473).